The sequence spans 285 residues: Bifunctional protein FolD (285 aa).

NADP(+) contacts are provided by residues 165 to 167 (GRS) and Ser190.

It belongs to the tetrahydrofolate dehydrogenase/cyclohydrolase family. Homodimer.

It catalyses the reaction (6R)-5,10-methylene-5,6,7,8-tetrahydrofolate + NADP(+) = (6R)-5,10-methenyltetrahydrofolate + NADPH. The enzyme catalyses (6R)-5,10-methenyltetrahydrofolate + H2O = (6R)-10-formyltetrahydrofolate + H(+). The protein operates within one-carbon metabolism; tetrahydrofolate interconversion. Its function is as follows. Catalyzes the oxidation of 5,10-methylenetetrahydrofolate to 5,10-methenyltetrahydrofolate and then the hydrolysis of 5,10-methenyltetrahydrofolate to 10-formyltetrahydrofolate. The sequence is that of Bifunctional protein FolD from Streptococcus pneumoniae serotype 4 (strain ATCC BAA-334 / TIGR4).